We begin with the raw amino-acid sequence, 2315 residues long: Receptor-type tyrosine-protein phosphatase zeta (2315 aa).

The signal sequence occupies residues 1–24; it reads MRILKRFLACIQLLCVCRLDWANG. Over 25 to 1636 the chain is Extracellular; that stretch reads YYRQQRKLVE…LAEGLESEKK (1612 aa). The 265-residue stretch at 36–300 folds into the Alpha-carbonic anhydrase domain; it reads IGWSYTGALN…KFSRQVFSSY (265 aa). 2 disulfide bridges follow: Cys56-Cys240 and Cys133-Cys264. Asn105, Asn134, Asn223, Asn232, Asn324, and Asn381 each carry an N-linked (GlcNAc...) asparagine glycan. The Fibronectin type-III domain maps to 314-413; that stretch reads EPENVQADPE…LIVDMPTDNP (100 aa). Disordered stretches follow at residues 442–462 and 477–507; these read IVNP…PQIS and AKTN…SQPV. Polar residues predominate over residues 496–507; sequence PNTSLNSTSQPV. Asn497, Asn501, and Asn552 each carry an N-linked (GlcNAc...) asparagine glycan. Ser587 is a glycosylation site (O-linked (Xyl...) (chondroitin sulfate) serine). Residues Asn602 and Asn629 are each glycosylated (N-linked (GlcNAc...) asparagine). Positions 628–650 are disordered; that stretch reads RNASEDSTSSGSEESLKDPSMEG. At Ser637 the chain carries Phosphoserine; alternate. Ser637 is a glycosylation site (O-linked (Xyl...) (chondroitin sulfate) serine; alternate). Ser639 carries the post-translational modification Phosphoserine. Asn677 carries N-linked (GlcNAc...) asparagine glycosylation. A glycan (O-linked (Xyl...) (chondroitin sulfate) serine) is linked at Ser997. 4 N-linked (GlcNAc...) asparagine glycosylation sites follow: Asn1017, Asn1050, Asn1082, and Asn1122. Over residues 1123-1138 the composition is skewed to polar residues; it reads FSVQPTHTVSQASGDT. Disordered stretches follow at residues 1123 to 1160, 1397 to 1523, 1543 to 1572, and 1584 to 1621; these read FSVQ…SSEM, KATS…EEND, LTSD…SFAD, and AGDS…NSSH. Low complexity predominate over residues 1145-1159; it reads SANSEPASSDPASSE. Over residues 1417–1432 the composition is skewed to acidic residues; it reads EDGDTDDDGDDDDDDR. Basic and acidic residues predominate over residues 1450–1465; the sequence is ESQEKVMNDSDTHENS. N-linked (GlcNAc...) asparagine glycosylation occurs at Asn1457. 2 stretches are compositionally biased toward polar residues: residues 1466–1479 and 1487–1513; these read LMDQ…SLSE and VTSV…GLSQ. Ser1549 and Ser1551 each carry an O-linked (Xyl...) (chondroitin sulfate) serine glycan. 2 stretches are compositionally biased toward polar residues: residues 1554 to 1572 and 1593 to 1606; these read GTSD…SFAD and FPQS…SENS. A glycan (N-linked (GlcNAc...) asparagine) is linked at Asn1562. Asn1618 carries N-linked (GlcNAc...) asparagine glycosylation. The helical transmembrane segment at 1637 to 1662 threads the bilayer; it reads AVIPLVIVSALTFICLVVLVGILIYW. Residues 1663-2315 lie on the Cytoplasmic side of the membrane; that stretch reads RKCFQTAHFY…NIAESLESLV (653 aa). Thr1684 and Thr1687 each carry phosphothreonine. 2 Tyrosine-protein phosphatase domains span residues 1717–1992 and 2023–2282; these read FTEE…LVEA and LEKQ…ILSL. Residues Asp1901, 1933-1939, and Gln1977 each bind substrate; that span reads CSAGVGR. The Phosphocysteine intermediate role is filled by Cys1933. The residue at position 2055 (Ser2055) is a Phosphoserine.

This sequence belongs to the protein-tyrosine phosphatase family. Receptor class 5 subfamily. In terms of assembly, the carbonic-anhydrase like domain interacts with CNTN1 (contactin). Interacts with PTN. Interaction with PTN promotes formation of homooligomers; oligomerization impairs phosphatase activity. Interacts (via chondroitin sulfate chains) with MDK (via C-terminal); this interaction is inhibited by PTN; this interaction promotes neuronal migration. In terms of tissue distribution, specifically expressed in the central nervous system, where it is localized in the Purkinje cell layer of the cerebellum, the dentate gyrus, and the subependymal layer of the anterior horn of the lateral ventricle. Developmentally regulated in the brain.

It is found in the cell membrane. Its subcellular location is the secreted. It catalyses the reaction O-phospho-L-tyrosyl-[protein] + H2O = L-tyrosyl-[protein] + phosphate. Its function is as follows. Protein tyrosine phosphatase that negatively regulates oligodendrocyte precursor proliferation in the embryonic spinal cord. Required for normal differentiation of the precursor cells into mature, fully myelinating oligodendrocytes. May play a role in protecting oligondendrocytes against apoptosis. May play a role in the establishment of contextual memory, probably via the dephosphorylation of proteins that are part of important signaling cascades. The chain is Receptor-type tyrosine-protein phosphatase zeta (PTPRZ1) from Homo sapiens (Human).